The primary structure comprises 297 residues: Transcription factor LRL3 (297 aa).

The tract at residues 59-109 (PDQFHHPQESGGPTMGSQEGLQPQGTVSTTSAPVVRQKPRVRARRGQATDP) is disordered. A compositionally biased stretch (polar residues) spans 73–90 (MGSQEGLQPQGTVSTTSA). The basic motif; degenerate stretch occupies residues 105–118 (QATDPHSIAERLRR). Positions 105 to 154 (QATDPHSIAERLRRERIAERMKSLQELVPNTNKTDKASMLDEIIEYVRFL) constitute a bHLH domain. Positions 119-154 (ERIAERMKSLQELVPNTNKTDKASMLDEIIEYVRFL) are helix-loop-helix motif.

Homodimer. Expressed in trichomes of the root maturation zone. Detected constitutively in flowers.

It is found in the nucleus. Transcription factor that regulates the development of root hairs. Does not seem to be involved in the regulation of sperm cell development. This is Transcription factor LRL3 from Arabidopsis thaliana (Mouse-ear cress).